A 188-amino-acid chain; its full sequence is Elongation factor P (188 aa).

This sequence belongs to the elongation factor P family.

It is found in the cytoplasm. It functions in the pathway protein biosynthesis; polypeptide chain elongation. Its function is as follows. Involved in peptide bond synthesis. Stimulates efficient translation and peptide-bond synthesis on native or reconstituted 70S ribosomes in vitro. Probably functions indirectly by altering the affinity of the ribosome for aminoacyl-tRNA, thus increasing their reactivity as acceptors for peptidyl transferase. This Rickettsia typhi (strain ATCC VR-144 / Wilmington) protein is Elongation factor P.